A 94-amino-acid polypeptide reads, in one-letter code: Pyrimidine/purine nucleoside phosphorylase (94 aa).

It belongs to the nucleoside phosphorylase PpnP family.

The enzyme catalyses a purine D-ribonucleoside + phosphate = a purine nucleobase + alpha-D-ribose 1-phosphate. The catalysed reaction is adenosine + phosphate = alpha-D-ribose 1-phosphate + adenine. It catalyses the reaction cytidine + phosphate = cytosine + alpha-D-ribose 1-phosphate. It carries out the reaction guanosine + phosphate = alpha-D-ribose 1-phosphate + guanine. The enzyme catalyses inosine + phosphate = alpha-D-ribose 1-phosphate + hypoxanthine. The catalysed reaction is thymidine + phosphate = 2-deoxy-alpha-D-ribose 1-phosphate + thymine. It catalyses the reaction uridine + phosphate = alpha-D-ribose 1-phosphate + uracil. It carries out the reaction xanthosine + phosphate = alpha-D-ribose 1-phosphate + xanthine. Functionally, catalyzes the phosphorolysis of diverse nucleosides, yielding D-ribose 1-phosphate and the respective free bases. Can use uridine, adenosine, guanosine, cytidine, thymidine, inosine and xanthosine as substrates. Also catalyzes the reverse reactions. This Salmonella paratyphi C (strain RKS4594) protein is Pyrimidine/purine nucleoside phosphorylase.